The chain runs to 566 residues: Cytochrome c oxidase subunit 1 (566 aa).

Helical transmembrane passes span 29 to 49 (IGVL…AFTV), 97 to 117 (VMIT…ALFG), 141 to 161 (LSYW…FAPG), 189 to 209 (LAIF…INMI), 227 to 247 (LFAW…PVLA), 278 to 298 (ILWF…FGIV), and 310 to 330 (IFGY…GFVV). H102 serves as a coordination point for Fe(II)-heme a. Residues H284 and Y288 each coordinate Cu cation. The segment at residues 284–288 (HPEVY) is a cross-link (1'-histidyl-3'-tyrosine (His-Tyr)). H333 and H334 together coordinate Cu cation. The next 2 helical transmembrane spans lie at 348-368 (FMMA…SWIA) and 381-401 (MLWA…GIVL). H419 is a binding site for heme a3. The next 3 membrane-spanning stretches (helical) occupy residues 420-440 (FHYV…YFWI), 455-475 (LHFW…HFLG), and 499-519 (LGAF…FYTL). H421 contributes to the Fe(II)-heme a binding site. Positions 543-566 (TSPPPEHTFEQLPKREDWERAPAH) are disordered. Over residues 549–566 (HTFEQLPKREDWERAPAH) the composition is skewed to basic and acidic residues.

Belongs to the heme-copper respiratory oxidase family. Cu(2+) is required as a cofactor. It depends on heme as a cofactor.

It is found in the cell membrane. It carries out the reaction 4 Fe(II)-[cytochrome c] + O2 + 8 H(+)(in) = 4 Fe(III)-[cytochrome c] + 2 H2O + 4 H(+)(out). It functions in the pathway energy metabolism; oxidative phosphorylation. Cytochrome c oxidase is the component of the respiratory chain that catalyzes the reduction of oxygen to water. Subunits 1-3 form the functional core of the enzyme complex. Co I is the catalytic subunit of the enzyme. Electrons originating in cytochrome c are transferred via the copper A center of subunit 2 and heme a of subunit 1 to the bimetallic center formed by heme a3 and copper B. This cytochrome c oxidase shows proton pump activity across the membrane in addition to the electron transfer. The protein is Cytochrome c oxidase subunit 1 (ctaD) of Cereibacter sphaeroides (Rhodobacter sphaeroides).